The primary structure comprises 528 residues: Probable rhamnogalacturonate lyase A (528 aa).

An N-terminal signal peptide occupies residues 1-20 (MLSKATLLLSLPFWARVANA). An N-linked (GlcNAc...) asparagine glycan is attached at asparagine 46. Intrachain disulfides connect cysteine 50-cysteine 93 and cysteine 184-cysteine 193. Asparagine 351 carries an N-linked (GlcNAc...) asparagine glycan.

The protein belongs to the polysaccharide lyase 4 family.

It is found in the secreted. It carries out the reaction Endotype eliminative cleavage of L-alpha-rhamnopyranosyl-(1-&gt;4)-alpha-D-galactopyranosyluronic acid bonds of rhamnogalacturonan I domains in ramified hairy regions of pectin leaving L-rhamnopyranose at the reducing end and 4-deoxy-4,5-unsaturated D-galactopyranosyluronic acid at the non-reducing end.. Pectinolytic enzymes consist of four classes of enzymes: pectin lyase, polygalacturonase, pectin methylesterase and rhamnogalacturonase. Degrades the rhamnogalacturonan I (RG-I) backbone of pectin. The sequence is that of Probable rhamnogalacturonate lyase A (rglA) from Neosartorya fischeri (strain ATCC 1020 / DSM 3700 / CBS 544.65 / FGSC A1164 / JCM 1740 / NRRL 181 / WB 181) (Aspergillus fischerianus).